The primary structure comprises 313 residues: Protein phosphatase PTC7 homolog fig (313 aa).

The PPM-type phosphatase domain occupies 47–307; it reads KEPLTDLQLR…DDITVILASL (261 aa). 3 residues coordinate Mn(2+): Asp83, Gly84, and Asp229.

The protein belongs to the PP2C family. Requires Mg(2+) as cofactor. Mn(2+) serves as cofactor.

It catalyses the reaction O-phospho-L-seryl-[protein] + H2O = L-seryl-[protein] + phosphate. The catalysed reaction is O-phospho-L-threonyl-[protein] + H2O = L-threonyl-[protein] + phosphate. The sequence is that of Protein phosphatase PTC7 homolog fig from Drosophila virilis (Fruit fly).